The sequence spans 66 residues: UPF0337 protein SAG0619 (66 aa).

The tract at residues 1 to 22 is disordered; the sequence is MSQEKLKSKLDQAKGGAKEGFG.

This sequence belongs to the UPF0337 (CsbD) family.

The protein is UPF0337 protein SAG0619 of Streptococcus agalactiae serotype V (strain ATCC BAA-611 / 2603 V/R).